A 261-amino-acid polypeptide reads, in one-letter code: 5-oxoprolinase subunit A (261 aa).

It belongs to the LamB/PxpA family. Forms a complex composed of PxpA, PxpB and PxpC.

The catalysed reaction is 5-oxo-L-proline + ATP + 2 H2O = L-glutamate + ADP + phosphate + H(+). Catalyzes the cleavage of 5-oxoproline to form L-glutamate coupled to the hydrolysis of ATP to ADP and inorganic phosphate. In Coprothermobacter proteolyticus (strain ATCC 35245 / DSM 5265 / OCM 4 / BT), this protein is 5-oxoprolinase subunit A.